The sequence spans 266 residues: Luciferase (266 aa).

Residues 22-41 (GLAAACCALAVASTIAFPYI) form a helical membrane-spanning segment.

This sequence belongs to the fungal luciferase family.

The protein localises to the membrane. It catalyses the reaction 3-hydroxyhispidin + O2 = (E)-caffeoylpyruvate + hnu + CO2. It carries out the reaction 3-hydroxyhispidin + O2 = 4-[(E)-2-(3,4-dihydroxyphenyl)ethenyl]-1,7-dihydroxy-2,3,5-trioxabicyclo[2.2.2]oct-7-en-6-one. Its function is as follows. Luciferase; part of the gene cluster that mediates the fungal bioluminescence cycle. Uses the fungal luciferin 3-hydroxyhispidin as a substrate to produce an endoperoxide as a high-energy intermediate with decomposition that yields oxyluciferin (also known as caffeoylpyruvate) and light emission. The fungal bioluminescence cycle begins with the hispidin synthetase that catalyzes the formation of hispidin which is further hydroxylated by the hispidin-3-hydroxylase, yielding the fungal luciferin 3-hydroxyhispidin. The luciferase then produces an endoperoxide as a high-energy intermediate with decomposition that yields oxyluciferin and light emission. Oxyluciferin can be recycled to caffeic acid by caffeoylpyruvate hydrolase. This Armillaria gallica (Bulbous honey fungus) protein is Luciferase.